The chain runs to 547 residues: Sodium-coupled neutral amino acid transporter 4 (547 aa).

Positions 1 to 34 are disordered; the sequence is MDPMELNNVSIEPDGDSCSGDSIQDSYTGMENSD. Residues 1–104 lie on the Extracellular side of the membrane; the sequence is MDPMELNNVS…GLSYAMANTG (104 aa). Over residues 19 to 31 the composition is skewed to polar residues; sequence SGDSIQDSYTGME. A Phosphoserine modification is found at S49. A helical membrane pass occupies residues 105-125; that stretch reads IILFIIMLLTVAILSLYSVHL. Topologically, residues 126 to 151 are cytoplasmic; it reads LLKTAKEGGSLIYEKLGEKAFGWPGK. Residues 152 to 172 traverse the membrane as a helical segment; it reads IGAFISITMQNIGAMSSYLFI. Residues 173-195 lie on the Extracellular side of the membrane; it reads IKYELPEVIRAFMGLEENTGEWY. A helical membrane pass occupies residues 196 to 216; the sequence is LNGNYLVLFVSVGIILPLSLL. The Cytoplasmic segment spans residues 217–220; sequence KNLG. The helical transmembrane segment at 221–241 threads the bilayer; it reads YLGYTSGFSLSCMVFFVSVVI. Residues 242–332 are Extracellular-facing; that stretch reads YKKFQIPCPL…PKYFVFNSRT (91 aa). An intrachain disulfide couples C249 to C321. 3 N-linked (GlcNAc...) asparagine glycosylation sites follow: N260, N264, and N276. Residues 333-353 form a helical membrane-spanning segment; sequence AYAIPILAFAFVCHPEVLPIY. The Cytoplasmic portion of the chain corresponds to 354-369; it reads SELKDRSRRKMQTVSN. A helical membrane pass occupies residues 370 to 390; it reads ISISGMLVMYLLAALFGYLSF. At 391 to 411 the chain is on the extracellular side; sequence YGDVEDELLHAYSKVYTFDTA. A helical membrane pass occupies residues 412–432; that stretch reads LLMVRLAVLVAVTLTVPIVLF. Residues 433-453 are Cytoplasmic-facing; it reads PIRTSVITLLFPRKPFSWLKH. A helical membrane pass occupies residues 454-474; the sequence is FGIAAIIIALNNILVILVPTI. Topologically, residues 475 to 476 are extracellular; it reads KY. Residues 477–497 traverse the membrane as a helical segment; sequence IFGFIGASSATMLIFILPAAF. Residues 498–514 are Cytoplasmic-facing; that stretch reads YLKLVKKEPLRSPQKIG. The chain crosses the membrane as a helical span at residues 515 to 535; the sequence is ALVFLVTGIIFMMGSMALIIL. Over 536–547 the chain is Extracellular; the sequence is DWIYNPPNPNHH.

It belongs to the amino acid/polyamine transporter 2 family. Post-translationally, the disulfide bond plays an important role in substrate transport, but has no effect on trafficking to the cell surface. As to expression, detected in liver, in hepatocytes surrounding the central vein. Not detected in heart, kidney, brain, lung, small intestine, spleen and thymus. Highly expressed in placenta.

Its subcellular location is the cell membrane. It is found in the cell projection. The protein localises to the microvillus membrane. The catalysed reaction is L-alanine(in) + Na(+)(in) = L-alanine(out) + Na(+)(out). It carries out the reaction L-methionine(in) + Na(+)(in) = L-methionine(out) + Na(+)(out). The enzyme catalyses L-asparagine(in) + Na(+)(in) = L-asparagine(out) + Na(+)(out). It catalyses the reaction L-threonine(in) + Na(+)(in) = L-threonine(out) + Na(+)(out). The catalysed reaction is L-serine(in) + Na(+)(in) = L-serine(out) + Na(+)(out). It carries out the reaction glycine(in) + Na(+)(in) = glycine(out) + Na(+)(out). The enzyme catalyses L-glutamine(in) + Na(+)(in) = L-glutamine(out) + Na(+)(out). It catalyses the reaction L-histidine(in) + Na(+)(in) = L-histidine(out) + Na(+)(out). The catalysed reaction is L-cysteine(in) + Na(+)(in) = L-cysteine(out) + Na(+)(out). It carries out the reaction L-proline(in) + Na(+)(in) = L-proline(out) + Na(+)(out). In terms of biological role, symporter that cotransports neutral amino acids and sodium ions from the extraccellular to the intracellular side of the cell membrane. The transport is electrogenic, pH dependent and partially tolerates substitution of Na(+) by Li(+). Preferentially transports smaller amino acids, such as glycine, L-alanine, L-serine, L-asparagine and L-threonine, followed by L-cysteine, L-histidine, L-proline and L-glutamine and L-methionine. The chain is Sodium-coupled neutral amino acid transporter 4 from Mus musculus (Mouse).